The chain runs to 184 residues: dTTP/UTP pyrophosphatase (184 aa).

D67 serves as the catalytic Proton acceptor.

It belongs to the Maf family. YhdE subfamily. A divalent metal cation is required as a cofactor.

The protein resides in the cytoplasm. It carries out the reaction dTTP + H2O = dTMP + diphosphate + H(+). It catalyses the reaction UTP + H2O = UMP + diphosphate + H(+). Nucleoside triphosphate pyrophosphatase that hydrolyzes dTTP and UTP. May have a dual role in cell division arrest and in preventing the incorporation of modified nucleotides into cellular nucleic acids. The protein is dTTP/UTP pyrophosphatase of Elusimicrobium minutum (strain Pei191).